A 352-amino-acid chain; its full sequence is Protein RecA (352 aa).

67–74 (GPESSGKT) serves as a coordination point for ATP. Positions 333–352 (DSTPDFAVDGNDAEETEQDF) are disordered. Residues 343-352 (NDAEETEQDF) show a composition bias toward acidic residues.

It belongs to the RecA family.

The protein resides in the cytoplasm. Functionally, can catalyze the hydrolysis of ATP in the presence of single-stranded DNA, the ATP-dependent uptake of single-stranded DNA by duplex DNA, and the ATP-dependent hybridization of homologous single-stranded DNAs. It interacts with LexA causing its activation and leading to its autocatalytic cleavage. In Klebsiella pneumoniae (strain 342), this protein is Protein RecA.